The following is a 140-amino-acid chain: NADPH-dependent 7-cyano-7-deazaguanine reductase (140 aa).

Cysteine 51 acts as the Thioimide intermediate in catalysis. Aspartate 58 (proton donor) is an active-site residue. Residues 73 to 75 (LES) and 92 to 93 (HE) contribute to the substrate site.

It belongs to the GTP cyclohydrolase I family. QueF type 1 subfamily.

It localises to the cytoplasm. The catalysed reaction is 7-aminomethyl-7-carbaguanine + 2 NADP(+) = 7-cyano-7-deazaguanine + 2 NADPH + 3 H(+). It functions in the pathway tRNA modification; tRNA-queuosine biosynthesis. Functionally, catalyzes the NADPH-dependent reduction of 7-cyano-7-deazaguanine (preQ0) to 7-aminomethyl-7-deazaguanine (preQ1). This is NADPH-dependent 7-cyano-7-deazaguanine reductase from Syntrophus aciditrophicus (strain SB).